The following is a 164-amino-acid chain: Cyanate hydratase (164 aa).

Catalysis depends on residues arginine 90, glutamate 93, and serine 116.

The protein belongs to the cyanase family.

The catalysed reaction is cyanate + hydrogencarbonate + 3 H(+) = NH4(+) + 2 CO2. Catalyzes the reaction of cyanate with bicarbonate to produce ammonia and carbon dioxide. This Ricinus communis (Castor bean) protein is Cyanate hydratase.